We begin with the raw amino-acid sequence, 251 residues long: Flap endonuclease Xni (251 aa).

Mg(2+) is bound at residue Asp104. In terms of domain architecture, 5'-3' exonuclease spans 160 to 249; the sequence is VQPQQLPDYW…IDGNLQQLRL (90 aa). Leu171, Ala172, Pro180, Val182, and Ile185 together coordinate K(+). An interaction with DNA region spans residues 184 to 189; the sequence is GIGPKS.

The protein belongs to the Xni family. The cofactor is Mg(2+). It depends on K(+) as a cofactor.

Its function is as follows. Has flap endonuclease activity. During DNA replication, flap endonucleases cleave the 5'-overhanging flap structure that is generated by displacement synthesis when DNA polymerase encounters the 5'-end of a downstream Okazaki fragment. The sequence is that of Flap endonuclease Xni from Escherichia coli O6:K15:H31 (strain 536 / UPEC).